The sequence spans 847 residues: Leucine--tRNA ligase (847 aa).

A 'HIGH' region motif is present at residues 41 to 51 (PYPSGRIHMGH). Positions 619–623 (KMSKS) match the 'KMSKS' region motif. Lys-622 contacts ATP.

It belongs to the class-I aminoacyl-tRNA synthetase family.

Its subcellular location is the cytoplasm. It carries out the reaction tRNA(Leu) + L-leucine + ATP = L-leucyl-tRNA(Leu) + AMP + diphosphate. The polypeptide is Leucine--tRNA ligase (Cereibacter sphaeroides (strain ATCC 17029 / ATH 2.4.9) (Rhodobacter sphaeroides)).